Here is a 509-residue protein sequence, read N- to C-terminus: MGLPWYRVHTVVLNDPGRLIAVHLMHTALVAGWAGSMALYELAVFDPSDPVLNPMWRQGMFVMPFMARLGVTDSWGGWSITGESVSNPGLWSFEGVALTHIVLSGMLFLAAIWHWVYWDLELFRDPRTGEPALDLPKIFGIHLLLSSLLCFGFGAFHVTGLFGPGMWVSDGYGVTGKVLPVAPAWGPEGFNPFNPGGVASHHIAAGTVGILAGVFHLTVRPPQRLYRALRMGNIETVLSSSISAVFFSAFVTCGTMWYGSATTPIELFGPTRYQWDSGYFQQEIEKRVENAIADGAAPSEAWSRIPDKLAFYDYIGNNPAKGGLFRAGPMNKGDGVAEAWLGHPVFQDKEGRELSVRRMPAFFETFPVILVDKDGIIRADIPFRRAESKYSIEQVGVTASFYGGKLNGQVFNDAPSVKKYARKAQLGEVFEFDRTTLESDGVFRSSPRGWFTFGHANFALIFFFGHLWHGSRTIFRDVFAGIGAEVTEQVEFGAFQKLGDRSSKKQGAV.

A run of 6 helical transmembrane segments spans residues 21–36 (AVHLMHTALVAGWAGS), 101–115 (IVLSGMLFLAAIWHW), 140–156 (GIHLLLSSLLCFGFGAF), 203–218 (IAAGTVGILAGVFHLT), 237–252 (VLSSSISAVFFSAFVT), and 457–472 (NFALIFFFGHLWHGSR).

This sequence belongs to the PsbB/PsbC family. PsbB subfamily. PSII is composed of 1 copy each of membrane proteins PsbA, PsbB, PsbC, PsbD, PsbE, PsbF, PsbH, PsbI, PsbJ, PsbK, PsbL, PsbM, PsbT, PsbX, PsbY, PsbZ, Psb30/Ycf12, at least 3 peripheral proteins of the oxygen-evolving complex and a large number of cofactors. It forms dimeric complexes. Binds multiple chlorophylls. PSII binds additional chlorophylls, carotenoids and specific lipids. is required as a cofactor.

The protein resides in the plastid. It is found in the chloroplast thylakoid membrane. One of the components of the core complex of photosystem II (PSII). It binds chlorophyll and helps catalyze the primary light-induced photochemical processes of PSII. PSII is a light-driven water:plastoquinone oxidoreductase, using light energy to abstract electrons from H(2)O, generating O(2) and a proton gradient subsequently used for ATP formation. The chain is Photosystem II CP47 reaction center protein from Pyropia yezoensis (Susabi-nori).